We begin with the raw amino-acid sequence, 253 residues long: MRILLSNDDGYLAPGLAALYEALRPLAEILVMAPEQNCSGASNSLTLSRPLSVSRSAATGFYYVNGTPTDSVHVALTGMLDTKPDLVVSGINNGQNMGDDTLYSGTVAAATEGIMFGVPAIAFSLVHKEWAHLGDAARVAAEIVRHYLDHPLPGQPLLNVNIPNLPYEELKGWRVTRLGKRHPSQPVIRQTNPRGEPIYWIGAAGDALDASEGTDFHATASGYVSITPLQLDLTHTQMLGATRDWARAGSGAS.

A divalent metal cation contacts are provided by Asp-8, Asp-9, Ser-39, and Asn-92.

Belongs to the SurE nucleotidase family. Requires a divalent metal cation as cofactor.

It localises to the cytoplasm. It catalyses the reaction a ribonucleoside 5'-phosphate + H2O = a ribonucleoside + phosphate. Functionally, nucleotidase that shows phosphatase activity on nucleoside 5'-monophosphates. The sequence is that of 5'-nucleotidase SurE from Burkholderia mallei (strain NCTC 10247).